A 98-amino-acid chain; its full sequence is UPF0235 protein Mmc1_3654 (98 aa).

Belongs to the UPF0235 family.

The sequence is that of UPF0235 protein Mmc1_3654 from Magnetococcus marinus (strain ATCC BAA-1437 / JCM 17883 / MC-1).